A 438-amino-acid polypeptide reads, in one-letter code: Thymidine phosphorylase (438 aa).

It belongs to the thymidine/pyrimidine-nucleoside phosphorylase family. Homodimer.

It carries out the reaction thymidine + phosphate = 2-deoxy-alpha-D-ribose 1-phosphate + thymine. The protein operates within pyrimidine metabolism; dTMP biosynthesis via salvage pathway; dTMP from thymine: step 1/2. Functionally, the enzymes which catalyze the reversible phosphorolysis of pyrimidine nucleosides are involved in the degradation of these compounds and in their utilization as carbon and energy sources, or in the rescue of pyrimidine bases for nucleotide synthesis. The chain is Thymidine phosphorylase from Sinorhizobium medicae (strain WSM419) (Ensifer medicae).